A 156-amino-acid chain; its full sequence is ATP synthase subunit b (156 aa).

Residues Ala-11–Gly-31 form a helical membrane-spanning segment.

Belongs to the ATPase B chain family. In terms of assembly, F-type ATPases have 2 components, F(1) - the catalytic core - and F(0) - the membrane proton channel. F(1) has five subunits: alpha(3), beta(3), gamma(1), delta(1), epsilon(1). F(0) has three main subunits: a(1), b(2) and c(10-14). The alpha and beta chains form an alternating ring which encloses part of the gamma chain. F(1) is attached to F(0) by a central stalk formed by the gamma and epsilon chains, while a peripheral stalk is formed by the delta and b chains.

It localises to the cell inner membrane. Functionally, f(1)F(0) ATP synthase produces ATP from ADP in the presence of a proton or sodium gradient. F-type ATPases consist of two structural domains, F(1) containing the extramembraneous catalytic core and F(0) containing the membrane proton channel, linked together by a central stalk and a peripheral stalk. During catalysis, ATP synthesis in the catalytic domain of F(1) is coupled via a rotary mechanism of the central stalk subunits to proton translocation. In terms of biological role, component of the F(0) channel, it forms part of the peripheral stalk, linking F(1) to F(0). In Psychrobacter cryohalolentis (strain ATCC BAA-1226 / DSM 17306 / VKM B-2378 / K5), this protein is ATP synthase subunit b.